The following is a 219-amino-acid chain: Ribosomal RNA small subunit methyltransferase G (219 aa).

S-adenosyl-L-methionine-binding residues include G81, L86, and R150.

Belongs to the methyltransferase superfamily. RNA methyltransferase RsmG family.

The protein localises to the cytoplasm. It catalyses the reaction guanosine(527) in 16S rRNA + S-adenosyl-L-methionine = N(7)-methylguanosine(527) in 16S rRNA + S-adenosyl-L-homocysteine. Functionally, specifically methylates the N7 position of guanine in position 527 of 16S rRNA. The sequence is that of Ribosomal RNA small subunit methyltransferase G from Magnetococcus marinus (strain ATCC BAA-1437 / JCM 17883 / MC-1).